Reading from the N-terminus, the 98-residue chain is DNA-binding protein Fis (98 aa).

A DNA-binding region (H-T-H motif) is located at residues 74–93; it reads QTRAALMMGINRGTLRKKLK.

It belongs to the transcriptional regulatory Fis family. Homodimer.

Its function is as follows. Activates ribosomal RNA transcription. Plays a direct role in upstream activation of rRNA promoters. This is DNA-binding protein Fis from Pectobacterium atrosepticum (strain SCRI 1043 / ATCC BAA-672) (Erwinia carotovora subsp. atroseptica).